The primary structure comprises 186 residues: Putative 5'(3')-deoxyribonucleotidase (186 aa).

Aspartate 6 (nucleophile) is an active-site residue. 3 residues coordinate Mg(2+): aspartate 6, aspartate 8, and aspartate 137. The Proton donor role is filled by aspartate 8.

It belongs to the 5'(3')-deoxyribonucleotidase family. The cofactor is Mg(2+).

Functionally, dephosphorylates the 5' and 2'(3')-phosphates of deoxyribonucleotides. This Bordetella pertussis (strain Tohama I / ATCC BAA-589 / NCTC 13251) protein is Putative 5'(3')-deoxyribonucleotidase.